The primary structure comprises 209 residues: MSVPAVLAGIREAEAQAGRAAGTVRLVAVTKGHSLDEIRGQVLAHGDFPLAENRGQELRDKVAGLPGAEWHFIGPLQRNKIKYLRGVTLVHSIEEPWQAQAIADAAAEWGQAPAVLLQRHNGEGQKHGVLPDDLPAVLREVRATGLEVRGLMAMAPYDDEARAAQVFADTARQAQDLGLVELSMGMSGDYPLAVAAGATLVRVGRSLFA.

N6-(pyridoxal phosphate)lysine is present on K31.

The protein belongs to the pyridoxal phosphate-binding protein YggS/PROSC family.

In terms of biological role, pyridoxal 5'-phosphate (PLP)-binding protein, which is involved in PLP homeostasis. This is Pyridoxal phosphate homeostasis protein from Deinococcus radiodurans (strain ATCC 13939 / DSM 20539 / JCM 16871 / CCUG 27074 / LMG 4051 / NBRC 15346 / NCIMB 9279 / VKM B-1422 / R1).